The following is a 337-amino-acid chain: MKAAVVEQFKKPLQVKEVEKPKISYGEVLVRIKACGVCHTDLHAAHGDWPVKPKLPLIPGHEGVGVIEEVGPGVTHLKVGDRVGIPWLYSACGHCDYCLSGQETLCERQQNAGYSVDGGYAEYCRAAADYVVKIPDNLSFEEAAPIFCAGVTTYKALKVTGAKPGEWVAIYGIGGLGHVAVQYAKAMGLNVVAVDLGDEKLELAKQLGADLVVNPKHDDAAQWIKEKVGGVHATVVTAVSKAAFESAYKSIRRGGACVLVGLPPEEIPIPIFDTVLNGVKIIGSIVGTRKDLQEALQFAAEGKVKTIVEVQPLENINDVFDRMLKGQINGRVVLKVD.

Cys38, His61, Cys92, Cys95, Cys98, Cys106, and Cys148 together coordinate Zn(2+). NAD(+)-binding positions include 172-177 (GIGGLG), Asp195, Lys200, 260-262 (VGL), and Arg331.

This sequence belongs to the zinc-containing alcohol dehydrogenase family. It depends on Zn(2+) as a cofactor.

The enzyme catalyses a primary alcohol + NAD(+) = an aldehyde + NADH + H(+). The catalysed reaction is a secondary alcohol + NAD(+) = a ketone + NADH + H(+). Substrate inhibition is not observed with any alcohols, and the enzyme-NADH dissociation is not considered to be a rate-limiting step. Its function is as follows. NAD(+)-dependent alcohol dehydrogenase. The chain is Alcohol dehydrogenase (adhT) from Geobacillus stearothermophilus (Bacillus stearothermophilus).